A 396-amino-acid chain; its full sequence is Diphosphomevalonate decarboxylase (396 aa).

(R)-5-diphosphomevalonate-binding positions include 19–22 (YWGK), R74, 153–158 (SGSACR), and T209.

It belongs to the diphosphomevalonate decarboxylase family. In terms of assembly, homodimer.

The enzyme catalyses (R)-5-diphosphomevalonate + ATP = isopentenyl diphosphate + ADP + phosphate + CO2. It participates in isoprenoid biosynthesis; isopentenyl diphosphate biosynthesis via mevalonate pathway; isopentenyl diphosphate from (R)-mevalonate: step 3/3. Diphosphomevalonate decarboxylase; part of the second module of ergosterol biosynthesis pathway that includes the middle steps of the pathway. MVD1/ERG19 converts diphosphomevalonate into isopentenyl diphosphate. The second module is carried out in the vacuole and involves the formation of farnesyl diphosphate, which is also an important intermediate in the biosynthesis of ubiquinone, dolichol, heme and prenylated proteins. Activity by the mevalonate kinase ERG12 first converts mevalonate into 5-phosphomevalonate. 5-phosphomevalonate is then further converted to 5-diphosphomevalonate by the phosphomevalonate kinase ERG8. The diphosphomevalonate decarboxylase MVD1/ERG19 then produces isopentenyl diphosphate. The isopentenyl-diphosphate delta-isomerase IDI1 then catalyzes the 1,3-allylic rearrangement of the homoallylic substrate isopentenyl (IPP) to its highly electrophilic allylic isomer, dimethylallyl diphosphate (DMAPP). Finally the farnesyl diphosphate synthase ERG20 catalyzes the sequential condensation of isopentenyl pyrophosphate with dimethylallyl pyrophosphate, and then with the resultant geranylpyrophosphate to the ultimate product farnesyl pyrophosphate. The protein is Diphosphomevalonate decarboxylase of Saccharomyces cerevisiae (strain ATCC 204508 / S288c) (Baker's yeast).